Consider the following 379-residue polypeptide: Phospholipase A1 (379 aa).

An N-terminal signal peptide occupies residues 1 to 20 (MKFITAILVIFCVYLLSTAG). Positions 21–73 (DSKILPLKKLPSKIFGHLKSHVDNTVKKPLKVFGHLKSHVENSVGPLRMNKLT) are excised as a propeptide. A disulfide bond links Cys-76 and Cys-154. Residue Asn-126 is glycosylated (N-linked (GlcNAc...) asparagine). Ser-204 serves as the catalytic Nucleophile. Asp-232 serves as the catalytic Charge relay system. 2 disulfides stabilise this stretch: Cys-243–Cys-248 and Cys-285–Cys-291. Catalysis depends on His-293, which acts as the Charge relay system.

The protein belongs to the AB hydrolase superfamily. Lipase family. In terms of processing, contains five disulfide bonds. In terms of tissue distribution, expressed by the venom gland.

The protein localises to the secreted. The enzyme catalyses a 1,2-diacyl-sn-glycero-3-phosphocholine + H2O = a 2-acyl-sn-glycero-3-phosphocholine + a fatty acid + H(+). Functionally, catalyzes the hydrolysis of phosphatidylcholine with phospholipase A1 activity. May act as an allergen and induce hemolytic activity. The protein is Phospholipase A1 of Dinoponera quadriceps (South American ant).